We begin with the raw amino-acid sequence, 415 residues long: Beta-1,4-glucuronyltransferase 1 (415 aa).

Residues 1-8 are Cytoplasmic-facing; that stretch reads MQMSYAIR. A helical; Signal-anchor for type II membrane protein membrane pass occupies residues 9–36; sequence CAFYQLLLAALMLVAMLQLLYLSLLSGL. Residues 37 to 415 are Lumenal-facing; that stretch reads HGQEEQDQYF…AKYPNSPRRC (379 aa). N204 is a glycosylation site (N-linked (GlcNAc...) asparagine). Mn(2+)-binding residues include D227 and D229. N-linked (GlcNAc...) asparagine glycosylation is present at N300.

It belongs to the glycosyltransferase 49 family. As to quaternary structure, interacts with LARGE1 and LARGE2. Requires Mn(2+) as cofactor.

Its subcellular location is the golgi apparatus membrane. The catalysed reaction is 3-O-[beta-D-Xyl-(1-&gt;4)-Rib-ol-P-Rib-ol-P-3-beta-D-GalNAc-(1-&gt;3)-beta-D-GlcNAc-(1-&gt;4)-(O-6-P-alpha-D-Man)]-Thr-[protein] + UDP-alpha-D-glucuronate = 3-O-[beta-D-GlcA-(1-&gt;3)-beta-D-Xyl-(1-&gt;4)-Rib-ol-P-Rib-ol-P-3-beta-D-GalNAc-(1-&gt;3)-beta-D-GlcNAc-(1-&gt;4)-(O-6-P-alpha-D-Man)]-Thr-[protein] + UDP + H(+). The protein operates within protein modification; protein glycosylation. Its function is as follows. Beta-1,4-glucuronyltransferase involved in O-mannosylation of alpha-dystroglycan (DAG1). Transfers a glucuronic acid (GlcA) residue onto a xylose (Xyl) acceptor to produce the glucuronyl-beta-1,4-xylose-beta disaccharide primer, which is further elongated by LARGE1, during synthesis of phosphorylated O-mannosyl glycan. Phosphorylated O-mannosyl glycan is a carbohydrate structure present in alpha-dystroglycan (DAG1), which is required for binding laminin G-like domain-containing extracellular proteins with high affinity. Required for axon guidance; via its function in O-mannosylation of alpha-dystroglycan (DAG1). The polypeptide is Beta-1,4-glucuronyltransferase 1 (Pongo abelii (Sumatran orangutan)).